Here is a 628-residue protein sequence, read N- to C-terminus: Chaperone protein HtpG (628 aa).

Residues 1 to 339 form an a; substrate-binding region; it reads MSNNQQTLGF…SNDLPLNVSR (339 aa). Residues 340-556 are b; it reads EILQDNKTTA…NDQMTTQMAK (217 aa). A c region spans residues 557-628; sequence LFAMSGQPVP…IKRVNTLLAG (72 aa).

Belongs to the heat shock protein 90 family. As to quaternary structure, homodimer.

Its subcellular location is the cytoplasm. Functionally, molecular chaperone. Has ATPase activity. This Actinobacillus succinogenes (strain ATCC 55618 / DSM 22257 / CCUG 43843 / 130Z) protein is Chaperone protein HtpG.